The chain runs to 106 residues: MIDLERKNKYKCSIEYTLSFMGGKWKPIILWHLGTEGIHRYGELKRKLDGITHKMLAQQLKELADDNLIIRKEYPQVPPKVEYSITEKGMGLMEILNLMHKWGQEN.

The HTH hxlR-type domain occupies 12-106 (CSIEYTLSFM…NLMHKWGQEN (95 aa)).

Functionally, potential regulator of the malBH genes. This is Putative regulatory protein MalR (malR) from Fusobacterium mortiferum.